Here is a 110-residue protein sequence, read N- to C-terminus: MASRRSRPQAASFRNGRRRQPTSYNDLLRMFGQMRVRKPPAQPTQAIIAEPGDLRHDLNQQERATLSSNVQRFFMIGHGSLTADAGGLTYTVSWVPTKQIQRKVAPPAGP.

Positions 1–24 (MASRRSRPQAASFRNGRRRQPTSY) are disordered.

Belongs to the arteriviridae nucleocapsid family.

The protein localises to the virion. This chain is Nucleoprotein (N), found in Equine arteritis virus (strain Bucyrus) (EAV).